An 84-amino-acid polypeptide reads, in one-letter code: Cell division topological specificity factor (84 aa).

Belongs to the MinE family.

In terms of biological role, prevents the cell division inhibition by proteins MinC and MinD at internal division sites while permitting inhibition at polar sites. This ensures cell division at the proper site by restricting the formation of a division septum at the midpoint of the long axis of the cell. The protein is Cell division topological specificity factor of Azotobacter vinelandii (strain DJ / ATCC BAA-1303).